Consider the following 229-residue polypeptide: MVSFKYLFLAASALGALAAPVEVEESSWFNETALHEFAERAGTPSSTGWNNGYYYSFWTDNGGTVNYQNGNGGSYSVQWKDTGNFVGGKGWNPGSARTINYSGSFNPSGNAYLTVYGWTTNPLVEYYIVENYGTYNPGNGGTYRGSVYSDGANYNIYTATRYNAPSIEGDKTFTQYWSVRQSKRTGGTVTTANHFNAWAQLGMSLGTHNYQIVATEGYQSSGSSSITVY.

A signal peptide spans 1–18 (MVSFKYLFLAASALGALA). N-linked (GlcNAc...) asparagine glycosylation is found at N30 and N100. A GH11 domain is found at 41–229 (AGTPSSTGWN…SSGSSSITVY (189 aa)). The active-site Nucleophile is E125. E216 acts as the Proton donor in catalysis.

It belongs to the glycosyl hydrolase 11 (cellulase G) family.

The protein localises to the secreted. It carries out the reaction Endohydrolysis of (1-&gt;4)-beta-D-xylosidic linkages in xylans.. It participates in glycan degradation; xylan degradation. Endo-1,4-beta-xylanase involved in the hydrolysis of xylan, a major structural heterogeneous polysaccharide found in plant biomass representing the second most abundant polysaccharide in the biosphere, after cellulose. This is Probable endo-1,4-beta-xylanase A (xlnA) from Aspergillus clavatus (strain ATCC 1007 / CBS 513.65 / DSM 816 / NCTC 3887 / NRRL 1 / QM 1276 / 107).